The primary structure comprises 601 residues: UvrABC system protein C (601 aa).

Residues 15–94 (LQPGVYLFKN…IKSYKPRYNI (80 aa)) form the GIY-YIG domain. A UVR domain is found at 202-237 (QEIVREKEKEMAMAARSLEFEKAARLRDQIQSLRQL).

It belongs to the UvrC family. As to quaternary structure, interacts with UvrB in an incision complex.

Its subcellular location is the cytoplasm. Its function is as follows. The UvrABC repair system catalyzes the recognition and processing of DNA lesions. UvrC both incises the 5' and 3' sides of the lesion. The N-terminal half is responsible for the 3' incision and the C-terminal half is responsible for the 5' incision. The protein is UvrABC system protein C of Syntrophomonas wolfei subsp. wolfei (strain DSM 2245B / Goettingen).